The primary structure comprises 448 residues: uncharacterized protein (448 aa).

Lysine 297 carries the N6-(pyridoxal phosphate)lysine modification.

This sequence belongs to the class-III pyridoxal-phosphate-dependent aminotransferase family. It depends on pyridoxal 5'-phosphate as a cofactor.

This is an uncharacterized protein from Sinorhizobium fredii (strain NBRC 101917 / NGR234).